We begin with the raw amino-acid sequence, 538 residues long: Probable bifunctional tRNA threonylcarbamoyladenosine biosynthesis protein (538 aa).

Residues 1–327 (MIVLICLGIE…FRTDEVEAPW (327 aa)) form a kae1 region. Residues His-111, His-115, and Tyr-132 each contribute to the Fe cation site. L-threonylcarbamoyladenylate-binding positions include 132–136 (YVSGG), Asp-164, Gly-177, Glu-181, and Asn-260. Residue Asp-288 participates in Fe cation binding. Positions 336–538 (KLPDNLIAKG…EIESRGRYTH (203 aa)) constitute a Protein kinase domain. ATP-binding positions include 342–350 (IAKGAESDI) and Lys-363. Asp-452 functions as the Proton acceptor; for kinase activity in the catalytic mechanism.

The protein in the N-terminal section; belongs to the KAE1 / TsaD family. It in the C-terminal section; belongs to the protein kinase superfamily. Tyr protein kinase family. BUD32 subfamily. In terms of assembly, component of the KEOPS complex that consists of Kae1, Bud32, Cgi121 and Pcc1; the whole complex dimerizes. The cofactor is Fe(2+).

The protein localises to the cytoplasm. It catalyses the reaction L-seryl-[protein] + ATP = O-phospho-L-seryl-[protein] + ADP + H(+). The catalysed reaction is L-threonyl-[protein] + ATP = O-phospho-L-threonyl-[protein] + ADP + H(+). The enzyme catalyses L-threonylcarbamoyladenylate + adenosine(37) in tRNA = N(6)-L-threonylcarbamoyladenosine(37) in tRNA + AMP + H(+). Functionally, required for the formation of a threonylcarbamoyl group on adenosine at position 37 (t(6)A37) in tRNAs that read codons beginning with adenine. Is a component of the KEOPS complex that is probably involved in the transfer of the threonylcarbamoyl moiety of threonylcarbamoyl-AMP (TC-AMP) to the N6 group of A37. The Kae1 domain likely plays a direct catalytic role in this reaction. The Bud32 domain probably displays kinase activity that regulates Kae1 function. The chain is Probable bifunctional tRNA threonylcarbamoyladenosine biosynthesis protein from Methanobrevibacter smithii (strain ATCC 35061 / DSM 861 / OCM 144 / PS).